We begin with the raw amino-acid sequence, 311 residues long: HPr kinase/phosphorylase (311 aa).

Catalysis depends on residues His-138 and Lys-159. Residue Gly-153–Ser-160 coordinates ATP. Ser-160 contributes to the Mg(2+) binding site. Asp-177 (proton acceptor; for phosphorylation activity. Proton donor; for dephosphorylation activity) is an active-site residue. The important for the catalytic mechanism of both phosphorylation and dephosphorylation stretch occupies residues Leu-201 to Asp-210. Residue Glu-202 participates in Mg(2+) binding. Residue Arg-243 is part of the active site. An important for the catalytic mechanism of dephosphorylation region spans residues Pro-264–Arg-269.

It belongs to the HPrK/P family. As to quaternary structure, homohexamer. Mg(2+) serves as cofactor.

It carries out the reaction [HPr protein]-L-serine + ATP = [HPr protein]-O-phospho-L-serine + ADP + H(+). The enzyme catalyses [HPr protein]-O-phospho-L-serine + phosphate + H(+) = [HPr protein]-L-serine + diphosphate. Catalyzes the ATP- as well as the pyrophosphate-dependent phosphorylation of a specific serine residue in HPr, a phosphocarrier protein of the phosphoenolpyruvate-dependent sugar phosphotransferase system (PTS). HprK/P also catalyzes the pyrophosphate-producing, inorganic phosphate-dependent dephosphorylation (phosphorolysis) of seryl-phosphorylated HPr (P-Ser-HPr). The two antagonistic activities of HprK/P are regulated by several intracellular metabolites, which change their concentration in response to the absence or presence of rapidly metabolisable carbon sources (glucose, fructose, etc.) in the growth medium. Therefore, by controlling the phosphorylation state of HPr, HPrK/P is a sensor enzyme that plays a major role in the regulation of carbon metabolism and sugar transport: it mediates carbon catabolite repression (CCR), and regulates PTS-catalyzed carbohydrate uptake and inducer exclusion. In Streptococcus gordonii (strain Challis / ATCC 35105 / BCRC 15272 / CH1 / DL1 / V288), this protein is HPr kinase/phosphorylase.